Here is a 757-residue protein sequence, read N- to C-terminus: Cellulose synthase-like protein B1 (757 aa).

2 helical membrane passes run 18 to 38 and 50 to 70; these read TNYF…SLLL and VWLV…LITC. The active site involves aspartate 136. Positions 186–216 form a coiled coil; it reads EFNRDWEKTKREYEKLRRKVEDATGDSHMLD. Aspartate 462 is a catalytic residue. 6 consecutive transmembrane segments (helical) span residues 533 to 553, 569 to 589, 615 to 635, 674 to 694, 710 to 730, and 737 to 757; these read LAYL…YCLL, LYLG…LWEF, LFSI…VFII, FLPG…FSVG, AEAC…MGLF, and TPLS…VFSV.

Belongs to the glycosyltransferase 2 family. Plant cellulose synthase-like B subfamily. As to expression, expressed in young seedlings, primarily in the vascular tissue.

It localises to the golgi apparatus membrane. In terms of biological role, thought to be a Golgi-localized beta-glycan synthase that polymerize the backbones of noncellulosic polysaccharides (hemicelluloses) of plant cell wall. This is Cellulose synthase-like protein B1 (CSLB1) from Arabidopsis thaliana (Mouse-ear cress).